Here is a 206-residue protein sequence, read N- to C-terminus: Large ribosomal subunit protein uL4 (206 aa).

Residues Arg-42–Ser-54 are compositionally biased toward polar residues. The disordered stretch occupies residues Arg-42–Arg-94. A compositionally biased stretch (basic residues) spans Phe-64 to Ser-76.

The protein belongs to the universal ribosomal protein uL4 family. Part of the 50S ribosomal subunit.

In terms of biological role, one of the primary rRNA binding proteins, this protein initially binds near the 5'-end of the 23S rRNA. It is important during the early stages of 50S assembly. It makes multiple contacts with different domains of the 23S rRNA in the assembled 50S subunit and ribosome. Its function is as follows. Forms part of the polypeptide exit tunnel. The protein is Large ribosomal subunit protein uL4 of Bartonella tribocorum (strain CIP 105476 / IBS 506).